Consider the following 280-residue polypeptide: MVINSELFRSSNSFQEEGFESVTNGLSFSITEENISDSVILTTFHDFTNWIRLSSLWPLLYGTSCCFIEFASLIGSRFDFDRYGLVPRSSPRQADLIITAGTVTMKMAPSLVRLYEQMPEPKYVIAMGACTITGGMFSTDSYSTVRGVDKLIPVDVYLPGCPPKPEAIIDAVIKLRKKVGQETAHEKKNYQQSQRCFTMSHRLKPVLPIHTGTYDQQTLRRTPGIEMDTSLEYPLERILQNSIETSSPFQDSEEIGLLKDWKQSNQKQEQNVKMMKEEEA.

[4Fe-4S] cluster is bound by residues cysteine 65, cysteine 66, cysteine 130, and cysteine 161. A disordered region spans residues leucine 257–alanine 280.

It belongs to the complex I 20 kDa subunit family. In terms of assembly, NDH is composed of at least 16 different subunits, 5 of which are encoded in the nucleus. It depends on [4Fe-4S] cluster as a cofactor.

It localises to the plastid. It is found in the chloroplast thylakoid membrane. The enzyme catalyses a plastoquinone + NADH + (n+1) H(+)(in) = a plastoquinol + NAD(+) + n H(+)(out). It carries out the reaction a plastoquinone + NADPH + (n+1) H(+)(in) = a plastoquinol + NADP(+) + n H(+)(out). NDH shuttles electrons from NAD(P)H:plastoquinone, via FMN and iron-sulfur (Fe-S) centers, to quinones in the photosynthetic chain and possibly in a chloroplast respiratory chain. The immediate electron acceptor for the enzyme in this species is believed to be plastoquinone. Couples the redox reaction to proton translocation, and thus conserves the redox energy in a proton gradient. This is NAD(P)H-quinone oxidoreductase subunit K, chloroplastic from Staurastrum punctulatum (Green alga).